Consider the following 78-residue polypeptide: MICOS complex subunit MIC10 (78 aa).

S2 carries the post-translational modification N-acetylserine. Residues 17-36 (AVVKIGTGFGLGIVFSLTFF) traverse the membrane as a helical segment. The Mitochondrial intermembrane segment spans residues 37-78 (KRRMWPLAFGSGMGLGMAYSNCQHDFQAPYLLHGKYVKEQEQ).

This sequence belongs to the MICOS complex subunit Mic10 family. As to quaternary structure, component of the mitochondrial contact site and cristae organizing system (MICOS) complex, composed of at least MICOS10/MIC10, CHCHD3/MIC19, CHCHD6/MIC25, APOOL/MIC27, IMMT/MIC60, APOO/MIC23/MIC26 and MICOS13/MIC13. This complex was also known under the names MINOS or MitOS complex. The MICOS complex associates with mitochondrial outer membrane proteins SAMM50, MTX1 and MTX2 (together described as components of the mitochondrial outer membrane sorting assembly machinery (SAM) complex) and DNAJC11, mitochondrial inner membrane protein TMEM11 and with HSPA9. The MICOS and SAM complexes together with DNAJC11 are part of a large protein complex spanning both membranes termed the mitochondrial intermembrane space bridging (MIB) complex. Interacts with IMMT/MIC60 and MICOS13/MIC13. Interacts with APOO/MIC23/MIC26 and APOOL/MIC27. Interacts with ARMC1.

The protein resides in the mitochondrion inner membrane. Functionally, component of the MICOS complex, a large protein complex of the mitochondrial inner membrane that plays crucial roles in the maintenance of crista junctions, inner membrane architecture, and formation of contact sites to the outer membrane. The protein is MICOS complex subunit MIC10 of Homo sapiens (Human).